We begin with the raw amino-acid sequence, 78 residues long: Putative membrane protein insertion efficiency factor (78 aa).

This sequence belongs to the UPF0161 family.

The protein localises to the cell inner membrane. Could be involved in insertion of integral membrane proteins into the membrane. In Prochlorococcus marinus subsp. pastoris (strain CCMP1986 / NIES-2087 / MED4), this protein is Putative membrane protein insertion efficiency factor.